Consider the following 325-residue polypeptide: N-acetyl-gamma-glutamyl-phosphate reductase (325 aa).

Residue C135 is part of the active site.

This sequence belongs to the NAGSA dehydrogenase family. Type 1 subfamily.

Its subcellular location is the cytoplasm. The catalysed reaction is N-acetyl-L-glutamate 5-semialdehyde + phosphate + NADP(+) = N-acetyl-L-glutamyl 5-phosphate + NADPH + H(+). The protein operates within amino-acid biosynthesis; L-arginine biosynthesis; N(2)-acetyl-L-ornithine from L-glutamate: step 3/4. In terms of biological role, catalyzes the NADPH-dependent reduction of N-acetyl-5-glutamyl phosphate to yield N-acetyl-L-glutamate 5-semialdehyde. In Flavobacterium johnsoniae (strain ATCC 17061 / DSM 2064 / JCM 8514 / BCRC 14874 / CCUG 350202 / NBRC 14942 / NCIMB 11054 / UW101) (Cytophaga johnsonae), this protein is N-acetyl-gamma-glutamyl-phosphate reductase.